A 317-amino-acid chain; its full sequence is uncharacterized protein (317 aa).

A compositionally biased stretch (low complexity) spans 68–78 (DSTNTDISNET). The interval 68–87 (DSTNTDISNETPILSNNTPI) is disordered.

This is an uncharacterized protein from Methanocaldococcus jannaschii (strain ATCC 43067 / DSM 2661 / JAL-1 / JCM 10045 / NBRC 100440) (Methanococcus jannaschii).